Reading from the N-terminus, the 190-residue chain is MGRDIYKDETLTIPKGVTVDIKARNVTVTGPRGTLKQNLRHVDIEMKKQGNTIKFIVWHGSRKHNACIRSVYSIINNMIIGVTQGFRYKMRLVYAHFPININLTENGTVVEIRNFLGERITRVIKCLPGVTVSISSAVKDEIILEGNSLENVSQSAANIKQICNVRNKDIRKFLDGIYVSERGNIEELEE.

It belongs to the universal ribosomal protein uL6 family. Component of the large ribosomal subunit (LSU). Mature yeast ribosomes consist of a small (40S) and a large (60S) subunit. The 40S small subunit contains 1 molecule of ribosomal RNA (18S rRNA) and at least 33 different proteins. The large 60S subunit contains 3 rRNA molecules (25S, 5.8S and 5S rRNA) and at least 46 different proteins. uL6 lines the binding pocket for eukaryotic elongation factor 2 (eEF2).

It is found in the cytoplasm. It localises to the nucleus. Functionally, component of the ribosome, a large ribonucleoprotein complex responsible for the synthesis of proteins in the cell. The small ribosomal subunit (SSU) binds messenger RNAs (mRNAs) and translates the encoded message by selecting cognate aminoacyl-transfer RNA (tRNA) molecules. The large subunit (LSU) contains the ribosomal catalytic site termed the peptidyl transferase center (PTC), which catalyzes the formation of peptide bonds, thereby polymerizing the amino acids delivered by tRNAs into a polypeptide chain. The nascent polypeptides leave the ribosome through a tunnel in the LSU and interact with protein factors that function in enzymatic processing, targeting, and the membrane insertion of nascent chains at the exit of the ribosomal tunnel. This Schizosaccharomyces pombe (strain 972 / ATCC 24843) (Fission yeast) protein is Large ribosomal subunit protein uL6A (rpl901).